The chain runs to 194 residues: MRKATIERKTGETQISLTFAVDGEGQSNLTTGVPFMTHMLDLFTKHGHFNLTIDAKGDTEVDDHHTTEDLGICLGLALKEALADKKGIRRYGSAFVPMDETLAQVVVDLSNRPHLEFRADMPSEKVGTFDTELVHEFLWKLALEARMNLHVIVHYGENTHHIIEAIFKALARALDEATTIDPRVKGVPSTKGML.

Belongs to the imidazoleglycerol-phosphate dehydratase family.

It is found in the cytoplasm. It carries out the reaction D-erythro-1-(imidazol-4-yl)glycerol 3-phosphate = 3-(imidazol-4-yl)-2-oxopropyl phosphate + H2O. It functions in the pathway amino-acid biosynthesis; L-histidine biosynthesis; L-histidine from 5-phospho-alpha-D-ribose 1-diphosphate: step 6/9. This is Imidazoleglycerol-phosphate dehydratase from Halalkalibacterium halodurans (strain ATCC BAA-125 / DSM 18197 / FERM 7344 / JCM 9153 / C-125) (Bacillus halodurans).